Reading from the N-terminus, the 573-residue chain is Proline--tRNA ligase (573 aa).

It belongs to the class-II aminoacyl-tRNA synthetase family. ProS type 1 subfamily. Homodimer.

Its subcellular location is the cytoplasm. It catalyses the reaction tRNA(Pro) + L-proline + ATP = L-prolyl-tRNA(Pro) + AMP + diphosphate. In terms of biological role, catalyzes the attachment of proline to tRNA(Pro) in a two-step reaction: proline is first activated by ATP to form Pro-AMP and then transferred to the acceptor end of tRNA(Pro). As ProRS can inadvertently accommodate and process non-cognate amino acids such as alanine and cysteine, to avoid such errors it has two additional distinct editing activities against alanine. One activity is designated as 'pretransfer' editing and involves the tRNA(Pro)-independent hydrolysis of activated Ala-AMP. The other activity is designated 'posttransfer' editing and involves deacylation of mischarged Ala-tRNA(Pro). The misacylated Cys-tRNA(Pro) is not edited by ProRS. This Methylobacillus flagellatus (strain ATCC 51484 / DSM 6875 / VKM B-1610 / KT) protein is Proline--tRNA ligase.